A 75-amino-acid chain; its full sequence is Large ribosomal subunit protein bL31 (75 aa).

Zn(2+)-binding residues include Cys16, Cys18, Cys37, and Cys40.

It belongs to the bacterial ribosomal protein bL31 family. Type A subfamily. Part of the 50S ribosomal subunit. Requires Zn(2+) as cofactor.

Its function is as follows. Binds the 23S rRNA. This is Large ribosomal subunit protein bL31 from Nitrosospira multiformis (strain ATCC 25196 / NCIMB 11849 / C 71).